An 811-amino-acid chain; its full sequence is LPS-assembly protein LptD (811 aa).

An N-terminal signal peptide occupies residues 1-17 (MTEPNRARKTRQRTAFA). Residues 1-22 (MTEPNRARKTRQRTAFAAPDQR) form a disordered region.

Belongs to the LptD family. In terms of assembly, component of the lipopolysaccharide transport and assembly complex. Interacts with LptE and LptA.

It is found in the cell outer membrane. In terms of biological role, together with LptE, is involved in the assembly of lipopolysaccharide (LPS) at the surface of the outer membrane. In Ralstonia nicotianae (strain ATCC BAA-1114 / GMI1000) (Ralstonia solanacearum), this protein is LPS-assembly protein LptD.